Reading from the N-terminus, the 195-residue chain is Transcription factor LBX2 (195 aa).

Disordered stretches follow at residues 1–89 (MNSV…KSRT) and 164–195 (PALP…QVDD). Positions 84-143 (RRKSRTAFTAQQVLELERRFVFQKYLAPSERDGLAARLGLANAQVVTWFQNRRAKLKRDV) form a DNA-binding region, homeobox. Acidic residues predominate over residues 186-195 (LSDEEIQVDD).

In terms of tissue distribution, expressed in the developing urogenital system, eye and brain.

The protein resides in the nucleus. Its function is as follows. Transcription factor. The protein is Transcription factor LBX2 (Lbx2) of Mus musculus (Mouse).